The chain runs to 363 residues: NAD(P)H-quinone oxidoreductase subunit 1, chloroplastic (363 aa).

A run of 6 helical transmembrane segments spans residues 30–50, 98–118, 129–149, 248–268, 300–320, and 343–363; these read LVPILTLVLGITIGVLVIVWL, FSIGPAIAVISILLSFSVIPF, IGIFLWIAISSIAPVGLLMSG, YSGIKFGLFYVASYLNLLLSS, IIGTTIGIFITLAKTYLFLFI, and FLLPISLGNLLLTTSFQLLSL.

It belongs to the complex I subunit 1 family. As to quaternary structure, NDH is composed of at least 16 different subunits, 5 of which are encoded in the nucleus.

Its subcellular location is the plastid. The protein resides in the chloroplast thylakoid membrane. The catalysed reaction is a plastoquinone + NADH + (n+1) H(+)(in) = a plastoquinol + NAD(+) + n H(+)(out). It catalyses the reaction a plastoquinone + NADPH + (n+1) H(+)(in) = a plastoquinol + NADP(+) + n H(+)(out). NDH shuttles electrons from NAD(P)H:plastoquinone, via FMN and iron-sulfur (Fe-S) centers, to quinones in the photosynthetic chain and possibly in a chloroplast respiratory chain. The immediate electron acceptor for the enzyme in this species is believed to be plastoquinone. Couples the redox reaction to proton translocation, and thus conserves the redox energy in a proton gradient. The polypeptide is NAD(P)H-quinone oxidoreductase subunit 1, chloroplastic (Gossypium barbadense (Sea Island cotton)).